The sequence spans 200 residues: NADH-quinone oxidoreductase subunit C (200 aa).

The protein belongs to the complex I 30 kDa subunit family. In terms of assembly, NDH-1 is composed of 14 different subunits. Subunits NuoB, C, D, E, F, and G constitute the peripheral sector of the complex.

The protein localises to the cell inner membrane. It catalyses the reaction a quinone + NADH + 5 H(+)(in) = a quinol + NAD(+) + 4 H(+)(out). In terms of biological role, NDH-1 shuttles electrons from NADH, via FMN and iron-sulfur (Fe-S) centers, to quinones in the respiratory chain. The immediate electron acceptor for the enzyme in this species is believed to be ubiquinone. Couples the redox reaction to proton translocation (for every two electrons transferred, four hydrogen ions are translocated across the cytoplasmic membrane), and thus conserves the redox energy in a proton gradient. In Burkholderia multivorans (strain ATCC 17616 / 249), this protein is NADH-quinone oxidoreductase subunit C.